The primary structure comprises 379 residues: Chaperone protein DnaJ (379 aa).

The 65-residue stretch at 5–69 (DYYEVLGISK…NKRASYDQFG (65 aa)) folds into the J domain. Residues 136–218 (GTTKEISIRK…CHGKGTENKT (83 aa)) form a CR-type zinc finger. Zn(2+)-binding residues include Cys149, Cys152, Cys166, Cys169, Cys192, Cys195, Cys206, and Cys209. CXXCXGXG motif repeat units lie at residues 149–156 (CETCHGDG), 166–173 (CSYCNGAG), 192–199 (CPKCNGSG), and 206–213 (CPTCHGKG).

The protein belongs to the DnaJ family. Homodimer. It depends on Zn(2+) as a cofactor.

The protein resides in the cytoplasm. In terms of biological role, participates actively in the response to hyperosmotic and heat shock by preventing the aggregation of stress-denatured proteins and by disaggregating proteins, also in an autonomous, DnaK-independent fashion. Unfolded proteins bind initially to DnaJ; upon interaction with the DnaJ-bound protein, DnaK hydrolyzes its bound ATP, resulting in the formation of a stable complex. GrpE releases ADP from DnaK; ATP binding to DnaK triggers the release of the substrate protein, thus completing the reaction cycle. Several rounds of ATP-dependent interactions between DnaJ, DnaK and GrpE are required for fully efficient folding. Also involved, together with DnaK and GrpE, in the DNA replication of plasmids through activation of initiation proteins. The polypeptide is Chaperone protein DnaJ (Staphylococcus aureus (strain USA300 / TCH1516)).